Consider the following 136-residue polypeptide: Thiosulfate sulfurtransferase 18 (136 aa).

The 103-residue stretch at 26 to 128 (LQSGHQYLDV…WVDHSFPINT (103 aa)) folds into the Rhodanese domain. The active-site Cysteine persulfide intermediate is Cys-88.

The protein resides in the cytoplasm. It catalyses the reaction thiosulfate + hydrogen cyanide = thiocyanate + sulfite + 2 H(+). Catalyzes the transfer of a sulfur ion from a donor to cyanide or to other thiol compounds. Substrate preference is thiosulfate &gt; 3-mercaptopyruvate. The polypeptide is Thiosulfate sulfurtransferase 18 (STR18) (Arabidopsis thaliana (Mouse-ear cress)).